We begin with the raw amino-acid sequence, 123 residues long: Putative iron-sulfur cluster insertion protein ErpA (123 aa).

C51, C115, and C117 together coordinate iron-sulfur cluster.

The protein belongs to the HesB/IscA family. Homodimer. Iron-sulfur cluster is required as a cofactor.

Functionally, required for insertion of 4Fe-4S clusters. The protein is Putative iron-sulfur cluster insertion protein ErpA of Burkholderia ambifaria (strain ATCC BAA-244 / DSM 16087 / CCUG 44356 / LMG 19182 / AMMD) (Burkholderia cepacia (strain AMMD)).